Here is a 637-residue protein sequence, read N- to C-terminus: Cell division cycle-related protein res1/sct1 (637 aa).

Residues 6 to 112 (IHKITYSGVE…YSGSAFMPMS (107 aa)) form the HTH APSES-type domain. The segment at residues 37–58 (ATQILKIAELDKPRRTRILEKF) is a DNA-binding region (H-T-H motif). The interval 114-137 (FTPQSNRKPTEAYRRNSPVKKSFS) is disordered. ANK repeat units lie at residues 236-265 (DGHT…NVVA) and 357-386 (HGDT…SSSI).

In terms of assembly, DSC1 contains cdc10 and sct1/res1.

Its function is as follows. Acts as a positive regulator of the mitotic cell cycle and as a negative regulator of sexual differentiation. May be involved in the transcriptional regulation of the cdc22 and cdt1 genes. Is an integral component of the DSC1-like complex. The sequence is that of Cell division cycle-related protein res1/sct1 (res1) from Schizosaccharomyces pombe (strain 972 / ATCC 24843) (Fission yeast).